We begin with the raw amino-acid sequence, 534 residues long: 26S proteasome non-ATPase regulatory subunit 3 (534 aa).

Residues 1–16 (MKQEGSARRRGADKAK) are compositionally biased toward basic and acidic residues. The disordered stretch occupies residues 1–68 (MKQEGSARRR…AAEHSQRELD (68 aa)). A compositionally biased stretch (pro residues) spans 17–32 (PPPGGGEQEPPPPPAP). A Glycyl lysine isopeptide (Lys-Gly) (interchain with G-Cter in SUMO1); alternate cross-link involves residue Lys38. Residue Lys38 forms a Glycyl lysine isopeptide (Lys-Gly) (interchain with G-Cter in SUMO2); alternate linkage. A compositionally biased stretch (low complexity) spans 49-61 (GETAGKTAAAAAE). Residues 286–465 (ARYLYYTGRI…GYVQSKEMID (180 aa)) form the PCI domain. Phosphoserine occurs at positions 418 and 430. Residues 500 to 534 (SYNKDLESAEERREREQQDLEFAKEMAEDDDDSFP) form a disordered region. The span at 501 to 525 (YNKDLESAEERREREQQDLEFAKEM) shows a compositional bias: basic and acidic residues.

This sequence belongs to the proteasome subunit S3 family. In terms of assembly, component of the 19S proteasome regulatory particle complex. The 26S proteasome consists of a 20S core particle (CP) and two 19S regulatory subunits (RP). The regulatory particle is made of a lid composed of 9 subunits including PSMD3, a base containing 6 ATPases and few additional components. Interacts with UBQLN1 (via ubiquitin-like domain). Interacts with ERCC6.

Its function is as follows. Component of the 26S proteasome, a multiprotein complex involved in the ATP-dependent degradation of ubiquitinated proteins. This complex plays a key role in the maintenance of protein homeostasis by removing misfolded or damaged proteins, which could impair cellular functions, and by removing proteins whose functions are no longer required. Therefore, the proteasome participates in numerous cellular processes, including cell cycle progression, apoptosis, or DNA damage repair. The polypeptide is 26S proteasome non-ATPase regulatory subunit 3 (PSMD3) (Bos taurus (Bovine)).